The sequence spans 500 residues: MEEIQRYLQLERSQQHDFLYPLIFQEYIYTFAHDHGFSRSIWSKNRGYDNKSSLLIVKRLITRMYQQNHFLISLNDSNQNPFWARNKNLYSQIISEGFAFIVEIPFSIRLISCLEGKKIVKSQNLRSIHSIFPFLEXNFSHLNFVLDILIPHPVHVEILDASSLHLLRFFLNEYCNWNSLITPKKASSSFSKINQRLFLFLYNSHVCEYESIFVFLRNQSSHLRSTSSGVLLERIYFYGKIEHLVNVFVTVKDFQANLWLVKEPCMHYIRYQRKSILASKGTSLFMNKWKCYLVTFWQWHFSLWFHPSRIYINQLSNHSLEFLGYLSSVRMNPSVVRSQILENAFLINNAIKKFDTLVPIIPLIASLAKAKFCNVLGHPISKPVRADLSDSNIIDRFGCICRNLSHYHSGSSKKKSLYRIKYILRLSCARTLARKHKSTVRAFLKRLGSELLEQFLMSEEDVLFXTFXKASSTLRGVNNSRIWYVDIISINDLAXHKSKF.

Belongs to the intron maturase 2 family. MatK subfamily.

The protein resides in the plastid. It is found in the chloroplast. Its function is as follows. Usually encoded in the trnK tRNA gene intron. Probably assists in splicing its own and other chloroplast group II introns. This chain is Maturase K, found in Proboscidea louisianica (Louisiana Devil's-claw).